The sequence spans 714 residues: Polynucleotide 5'-hydroxyl-kinase NOL9 (714 aa).

N-acetylalanine is present on Ala-2. Residues 31–47 (RRGRRRFGVLTRVELRR) carry the Nucleolar localization signal motif. The interval 80 to 133 (ARSRPAPRSPPTPSVPPAPCTASATCSLLNPRNHSTPQSRAGRPVRKVSPNVTQ) is disordered. Pro residues predominate over residues 86–98 (PRSPPTPSVPPAP). Residues 107-118 (LLNPRNHSTPQS) show a composition bias toward polar residues. A Phosphoserine modification is found at Ser-128. ATP is bound at residue 322-329 (GACDIGKS). Positions 495–714 (FTYEEKESSP…PRHKLRQRRK (220 aa)) are interaction with LAS1L. Lys-500 participates in a covalent cross-link: Glycyl lysine isopeptide (Lys-Gly) (interchain with G-Cter in SUMO2). The residue at position 502 (Ser-502) is a Phosphoserine.

This sequence belongs to the Clp1 family. NOL9/GRC3 subfamily. As to quaternary structure, interacts with PELP1, WDR18 and SENP3. Interacts with LAS1L to form an ITS2 pre-rRNA endonuclease-kinase complex.

The protein resides in the nucleus. It is found in the nucleolus. The catalysed reaction is a 5'-end dephospho-2'-deoxyribonucleoside-DNA + ATP = a 5'-end 5'-phospho-2'-deoxyribonucleoside-DNA + ADP + H(+). It carries out the reaction a 5'-end dephospho-ribonucleoside-RNA + ATP = a 5'-end 5'-phospho-ribonucleoside-RNA + ADP + H(+). Polynucleotide kinase that can phosphorylate the 5'-hydroxyl groups of single-stranded and double-stranded RNA and DNA substrates. Involved in rRNA processing and its kinase activity is required for the processing of the 32S precursor into 5.8S and 28S rRNAs, more specifically for the generation of the major 5.8S(S) form. Required for the efficient pre-rRNA processing of internal transcribed spacer 2 (ITS2). Associates with LAS1L to form an ITS2 pre-rRNA endonuclease-kinase complex and is responsible for the transport of this complex into the nucleolus. The chain is Polynucleotide 5'-hydroxyl-kinase NOL9 from Mus musculus (Mouse).